The primary structure comprises 304 residues: tRNA-uridine aminocarboxypropyltransferase 1 (304 aa).

Ser2 carries the post-translational modification N-acetylserine. A DXTW motif is present at residues 206–209 (DSTW).

Belongs to the TDD superfamily. DTWD1 family.

The protein resides in the nucleus. It catalyses the reaction a uridine in tRNA + S-adenosyl-L-methionine = a 3-[(3S)-3-amino-3-carboxypropyl]uridine in tRNA + S-methyl-5'-thioadenosine + H(+). Its function is as follows. Catalyzes the formation of 3-(3-amino-3-carboxypropyl)uridine (acp3U) at position 20 in the D-loop of several cytoplasmic tRNAs (acp3U(20)). This Homo sapiens (Human) protein is tRNA-uridine aminocarboxypropyltransferase 1.